The following is a 130-amino-acid chain: Small ribosomal subunit protein uS9 (130 aa).

It belongs to the universal ribosomal protein uS9 family.

In Shigella dysenteriae serotype 1 (strain Sd197), this protein is Small ribosomal subunit protein uS9.